The following is a 241-amino-acid chain: 3-oxoacyl-[acyl-carrier-protein] reductase FabG (241 aa).

NADP(+)-binding positions include 13–16 (GASG), Ser-38, 57–58 (EV), and Asn-83. Ser-135 provides a ligand contact to substrate. The active-site Proton acceptor is Tyr-148. NADP(+)-binding positions include 148–152 (YCASK) and Ile-181.

Belongs to the short-chain dehydrogenases/reductases (SDR) family. In terms of assembly, homotetramer.

The catalysed reaction is a (3R)-hydroxyacyl-[ACP] + NADP(+) = a 3-oxoacyl-[ACP] + NADPH + H(+). It functions in the pathway lipid metabolism; fatty acid biosynthesis. Functionally, catalyzes the NADPH-dependent reduction of beta-ketoacyl-ACP substrates to beta-hydroxyacyl-ACP products, the first reductive step in the elongation cycle of fatty acid biosynthesis. The sequence is that of 3-oxoacyl-[acyl-carrier-protein] reductase FabG (fabG) from Rickettsia typhi (strain ATCC VR-144 / Wilmington).